The primary structure comprises 250 residues: Ino eighty subunit 3 (250 aa).

Residues 29–70 (PDFLEKDPHHKKFHNADGLNQQGSSTPSTATDANAASTASTH) are disordered. The segment covering 52–70 (SSTPSTATDANAASTASTH) has biased composition (low complexity). Ser-157 and Ser-211 each carry phosphoserine.

Component of the chromatin-remodeling INO80 complex, at least composed of ARP4, ARP5, ARP8, RVB1, RVB2, TAF14, NHP10, IES1, IES3, IES4, IES6, ACT1, IES2, IES5 and INO80.

The protein resides in the nucleus. Functionally, probably involved in transcription regulation via its interaction with the INO80 complex, a chromatin-remodeling complex. The chain is Ino eighty subunit 3 (IES3) from Saccharomyces cerevisiae (strain ATCC 204508 / S288c) (Baker's yeast).